The chain runs to 29 residues: Cyclotide mela-2 (29 aa).

The segment at residues 1–29 is a cross-link (cyclopeptide (Gly-Asp)); it reads GKPTCGETCFKGKCYTPGCTCSYPLCKKD. Disulfide bonds link C5–C19, C9–C21, and C14–C26.

This is a cyclic peptide. Post-translationally, contains 3 disulfide bonds.

In terms of biological role, probably participates in a plant defense mechanism (Potential). Binds to and induces leakage in phospholipd membranes, particularly ones containing 1-palmitoyl-2-oleophosphatidylethanolamine (POPE). In vitro, displays cytotoxicity against cultured cells but no hemolytic activity towards fresh erythrocytes. Not active against Gram-negative bacterium E.coli ATCC 25922 or Gram-positive bacterium S.aureus ATCC 25923 up to a concentration of 64 uM. This Melicytus latifolius (Norfolk Island mahoe) protein is Cyclotide mela-2.